The chain runs to 172 residues: MAMPRKLKLMNVFLNGYSYQGVAKSVTLPKLTRKLENYRGAGMNGSAPVDLGLDDDALSMEWSLGGFPDSVIWELYAATGVDAVPIRFAGSYQRDDTGETVAVEVVMRGRQKEIDTGEGKQGEDTESKISVVCTYFRLTMDGKELVEIDTINMIEKVNGVDRLEQHRRNIGL.

This sequence belongs to the P2likevirus major tail tube protein family.

Its subcellular location is the virion. Its function is as follows. Forms the virus tail tube. This is Tail tube protein (FII) from Escherichia phage P2 (Bacteriophage P2).